Here is a 637-residue protein sequence, read N- to C-terminus: ATP-dependent zinc metalloprotease FtsH (637 aa).

Over 1 to 6 (MNNQGR) the chain is Cytoplasmic. Residues 7–27 (SILAWAALFIFVILLFNVFQS) form a helical membrane-spanning segment. Residues 28-103 (DGLLGVRNNI…VVPLETRMNT (76 aa)) are Periplasmic-facing. The helical transmembrane segment at 104–124 (FLGFLISWFPMLLLIGVWVFF) threads the bilayer. Residues 125–637 (MRQMHGGGKA…TKAQKENIAS (513 aa)) lie on the Cytoplasmic side of the membrane. 195 to 202 (GPPGTGKT) contacts ATP. A Zn(2+)-binding site is contributed by His417. Glu418 is an active-site residue. The Zn(2+) site is built by His421 and Asp495. Residues 617 to 637 (DKEKLHEKTKTTKAQKENIAS) are disordered.

It in the central section; belongs to the AAA ATPase family. This sequence in the C-terminal section; belongs to the peptidase M41 family. As to quaternary structure, homohexamer. It depends on Zn(2+) as a cofactor.

The protein localises to the cell inner membrane. In terms of biological role, acts as a processive, ATP-dependent zinc metallopeptidase for both cytoplasmic and membrane proteins. Plays a role in the quality control of integral membrane proteins. The polypeptide is ATP-dependent zinc metalloprotease FtsH (Rickettsia typhi (strain ATCC VR-144 / Wilmington)).